Here is a 179-residue protein sequence, read N- to C-terminus: Interleukin-10 (179 aa).

Residues methionine 1 to alanine 19 form the signal peptide. Disulfide bonds link cysteine 31–cysteine 127 and cysteine 81–cysteine 133. A glycan (N-linked (GlcNAc...) asparagine) is linked at asparagine 135.

The protein belongs to the IL-10 family. As to quaternary structure, homodimer. Interacts with IL10RA and IL10RB.

The protein localises to the secreted. Functionally, major immune regulatory cytokine that acts on many cells of the immune system where it has profound anti-inflammatory functions, limiting excessive tissue disruption caused by inflammation. Mechanistically, IL10 binds to its heterotetrameric receptor comprising IL10RA and IL10RB leading to JAK1 and STAT2-mediated phosphorylation of STAT3. In turn, STAT3 translocates to the nucleus where it drives expression of anti-inflammatory mediators. Targets antigen-presenting cells (APCs) such as macrophages and monocytes and inhibits their release of pro-inflammatory cytokines including granulocyte-macrophage colony-stimulating factor /GM-CSF, granulocyte colony-stimulating factor/G-CSF, IL-1 alpha, IL-1 beta, IL-6, IL-8 and TNF-alpha. Also interferes with antigen presentation by reducing the expression of MHC-class II and co-stimulatory molecules, thereby inhibiting their ability to induce T cell activation. In addition, controls the inflammatory response of macrophages by reprogramming essential metabolic pathways including mTOR signaling. This is Interleukin-10 (IL10) from Bubalus carabanensis (Swamp type water buffalo).